The following is a 269-amino-acid chain: Sulfur carrier protein FdhD (269 aa).

C111 (cysteine persulfide intermediate) is an active-site residue.

The protein belongs to the FdhD family.

It localises to the cytoplasm. Its function is as follows. Required for formate dehydrogenase (FDH) activity. Acts as a sulfur carrier protein that transfers sulfur from IscS to the molybdenum cofactor prior to its insertion into FDH. This chain is Sulfur carrier protein FdhD, found in Brucella melitensis biotype 1 (strain ATCC 23456 / CCUG 17765 / NCTC 10094 / 16M).